We begin with the raw amino-acid sequence, 447 residues long: Putative MSV199 domain-containing protein 420R (447 aa).

Residues 188 to 221 (IQTRSMLKKVEEEKIKIENEKEKALRKMLRLKEI) adopt a coiled-coil conformation.

The sequence is that of Putative MSV199 domain-containing protein 420R from Acheta domesticus (House cricket).